The following is a 293-amino-acid chain: Light-independent protochlorophyllide reductase iron-sulfur ATP-binding protein (293 aa).

Residues 10 to 15 (GIGKST) and Lys39 contribute to the ATP site. Ser14 lines the Mg(2+) pocket. Positions 95 and 129 each coordinate [4Fe-4S] cluster. 180–181 (NR) provides a ligand contact to ATP.

The protein belongs to the NifH/BchL/ChlL family. Homodimer. Protochlorophyllide reductase is composed of three subunits; ChlL, ChlN and ChlB. Requires [4Fe-4S] cluster as cofactor.

It is found in the plastid. It localises to the chloroplast. The enzyme catalyses chlorophyllide a + oxidized 2[4Fe-4S]-[ferredoxin] + 2 ADP + 2 phosphate = protochlorophyllide a + reduced 2[4Fe-4S]-[ferredoxin] + 2 ATP + 2 H2O. Its pathway is porphyrin-containing compound metabolism; chlorophyll biosynthesis (light-independent). Its function is as follows. Component of the dark-operative protochlorophyllide reductase (DPOR) that uses Mg-ATP and reduced ferredoxin to reduce ring D of protochlorophyllide (Pchlide) to form chlorophyllide a (Chlide). This reaction is light-independent. The L component serves as a unique electron donor to the NB-component of the complex, and binds Mg-ATP. This Adiantum capillus-veneris (Maidenhair fern) protein is Light-independent protochlorophyllide reductase iron-sulfur ATP-binding protein.